Consider the following 253-residue polypeptide: MPTWDDQQYLKFADERTRAARDLLARVPLDDAATVVDLGCGPGNSTALLVERWPQARVVGVDSSAEMLRSARQALPQVEWMQADLRAWAPAAPVDLIFANAVMQWLPDHATLLPELLRHLRPGGVLAIQMPRNYDEPSHRLMRETPGPWAARLAGARAIAPLPAAAWYYDLLAPHARQLELWQTTYEQVMDDAGAIVEWVRGTGLRPYLEALAEDEHPAYLAAYEAGIDAAYPPRSDGRRLFPFPRLFMVAVR.

The protein belongs to the methyltransferase superfamily. Tam family.

It is found in the cytoplasm. It catalyses the reaction trans-aconitate + S-adenosyl-L-methionine = (E)-3-(methoxycarbonyl)pent-2-enedioate + S-adenosyl-L-homocysteine. Functionally, catalyzes the S-adenosylmethionine monomethyl esterification of trans-aconitate. The chain is Trans-aconitate 2-methyltransferase from Azoarcus sp. (strain BH72).